A 517-amino-acid polypeptide reads, in one-letter code: 2-isopropylmalate synthase (517 aa).

A Pyruvate carboxyltransferase domain is found at 5-268 (IIIFDTTLRD…DTRINTQEIH (264 aa)). Residues D14, H202, H204, and N238 each contribute to the Mn(2+) site. Positions 393–517 (SLDVITSQTI…ADLKSHKISQ (125 aa)) are regulatory domain.

This sequence belongs to the alpha-IPM synthase/homocitrate synthase family. LeuA type 1 subfamily. In terms of assembly, homodimer. It depends on Mn(2+) as a cofactor.

It is found in the cytoplasm. It carries out the reaction 3-methyl-2-oxobutanoate + acetyl-CoA + H2O = (2S)-2-isopropylmalate + CoA + H(+). Its pathway is amino-acid biosynthesis; L-leucine biosynthesis; L-leucine from 3-methyl-2-oxobutanoate: step 1/4. Its function is as follows. Catalyzes the condensation of the acetyl group of acetyl-CoA with 3-methyl-2-oxobutanoate (2-ketoisovalerate) to form 3-carboxy-3-hydroxy-4-methylpentanoate (2-isopropylmalate). In Histophilus somni (strain 2336) (Haemophilus somnus), this protein is 2-isopropylmalate synthase.